An 86-amino-acid polypeptide reads, in one-letter code: Anti-adapter protein IraP (86 aa).

Residues 1-42 are a coiled coil; that stretch reads MKNLIAELLVKLAQKEEESKELVAQVEALEIVVTALLRQMAQ.

This sequence belongs to the IraP family. As to quaternary structure, interacts with RssB.

It is found in the cytoplasm. Functionally, inhibits RpoS proteolysis by regulating RssB activity, thereby increasing the stability of the sigma stress factor RpoS especially during phosphate starvation, but also in stationary phase and during nitrogen starvation. Its effect on RpoS stability is due to its interaction with RssB, which probably blocks the interaction of RssB with RpoS, and the consequent delivery of the RssB-RpoS complex to the ClpXP protein degradation pathway. In Enterobacter sp. (strain 638), this protein is Anti-adapter protein IraP.